A 92-amino-acid polypeptide reads, in one-letter code: Small ribosomal subunit protein uS19 (92 aa).

Residues 72–92 (GEFSPTRTYTGHGSDKKSKRG) are disordered.

Belongs to the universal ribosomal protein uS19 family.

Its function is as follows. Protein S19 forms a complex with S13 that binds strongly to the 16S ribosomal RNA. This Gluconobacter oxydans (strain 621H) (Gluconobacter suboxydans) protein is Small ribosomal subunit protein uS19.